Reading from the N-terminus, the 331-residue chain is Olfactory receptor 6K3 (331 aa).

Residues 1 to 41 (MCWTMPSPFTGSSTRNMESGNQSTVTEFIFTGFPQLQDGSL) lie on the Extracellular side of the membrane. Residue Asn21 is glycosylated (N-linked (GlcNAc...) asparagine). A helical membrane pass occupies residues 42–62 (LYFFPLLFIYTFIIIDNLLIF). At 63–70 (SAVRLDTH) the chain is on the cytoplasmic side. A helical membrane pass occupies residues 71–91 (LHNPMYNFISIFSFLEIWYTT). The Extracellular portion of the chain corresponds to 92-115 (ATIPKMLSNLISEKKAISMTGCIL). A disulfide bridge links Cys113 with Cys205. A helical membrane pass occupies residues 116 to 136 (QMYFFHSLENSEGILLTTMAI). The Cytoplasmic segment spans residues 137–155 (DRYVAICNPLRYQMIMTPR). A helical membrane pass occupies residues 156–176 (LCAQLSAGSCLFGFLILLPEI). Residues 177 to 212 (VMISTLPFCGPNQIHQIFCDLVPVLSLACTDTSMIL) are Extracellular-facing. Residues 213–232 (IEDVIHAVTIIITFLIIALS) traverse the membrane as a helical segment. Over 233-252 (YVRIVTVILRIPSSEGRQKA) the chain is Cytoplasmic. A helical membrane pass occupies residues 253-273 (FSTCAGHLMVFPIFFGSVSLM). The Extracellular segment spans residues 274–286 (YLRFSDTYPPVLD). Residues 287–307 (TAIALMFTVLAPFFNPIIYSL) form a helical membrane-spanning segment. Residues 308–331 (RNKDMNNAIKKLFCLQKVLNKPGG) lie on the Cytoplasmic side of the membrane.

Belongs to the G-protein coupled receptor 1 family.

Its subcellular location is the cell membrane. Its function is as follows. Odorant receptor. This is Olfactory receptor 6K3 (OR6K3) from Homo sapiens (Human).